The following is a 764-amino-acid chain: 5-methyltetrahydropteroyltriglutamate--homocysteine methyltransferase (764 aa).

5-methyltetrahydropteroyltri-L-glutamate is bound by residues 16–19 and K115; that span reads RELK. L-homocysteine is bound by residues 435–437 and E488; that span reads IGS. L-methionine-binding positions include 435 to 437 and E488; that span reads IGS. 5-methyltetrahydropteroyltri-L-glutamate contacts are provided by residues 519–520 and W565; that span reads RC. D603 serves as a coordination point for L-homocysteine. D603 is an L-methionine binding site. 5-methyltetrahydropteroyltri-L-glutamate is bound at residue E609. Zn(2+) is bound by residues H645, C647, and E669. The Proton donor role is filled by H698. A Zn(2+)-binding site is contributed by C730.

Belongs to the vitamin-B12 independent methionine synthase family. It depends on Zn(2+) as a cofactor.

It catalyses the reaction 5-methyltetrahydropteroyltri-L-glutamate + L-homocysteine = tetrahydropteroyltri-L-glutamate + L-methionine. It functions in the pathway amino-acid biosynthesis; L-methionine biosynthesis via de novo pathway; L-methionine from L-homocysteine (MetE route): step 1/1. Functionally, catalyzes the transfer of a methyl group from 5-methyltetrahydrofolate to homocysteine resulting in methionine formation. The sequence is that of 5-methyltetrahydropteroyltriglutamate--homocysteine methyltransferase from Burkholderia pseudomallei (strain 1106a).